Here is a 1209-residue protein sequence, read N- to C-terminus: Neural cell adhesion molecule L1-like protein (1209 aa).

An N-terminal signal peptide occupies residues 1–25 (MMELPLCGRGLILSLIFLLLKLSAA). The Extracellular segment spans residues 26–1083 (EIPLSVQQVP…LYDDISTQGW (1058 aa)). 2 Ig-like C2-type domains span residues 35 to 124 (PTIV…EEIE) and 128 to 223 (PGVP…MKLT). 2 disulfide bridges follow: cysteine 57–cysteine 109 and cysteine 153–cysteine 204. The N-linked (GlcNAc...) asparagine glycan is linked to asparagine 87. Asparagine 225 and asparagine 299 each carry an N-linked (GlcNAc...) asparagine glycan. 4 Ig-like C2-type domains span residues 235 to 328 (PKLL…VTVE), 331 to 417 (PRWK…ANID), 423 to 510 (PLIK…ANLD), and 515 to 607 (TKLR…TQVT). 4 disulfides stabilise this stretch: cysteine 262–cysteine 310, cysteine 352–cysteine 401, cysteine 445–cysteine 494, and cysteine 536–cysteine 591. An N-linked (GlcNAc...) asparagine glycan is attached at asparagine 476. The DGEA signature appears at 555–558 (DGEA). 2 N-linked (GlcNAc...) asparagine glycosylation sites follow: asparagine 562 and asparagine 580. 4 Fibronectin type-III domains span residues 614–709 (PPGN…TPPA), 714–807 (NPQN…SGED), 812–914 (APVI…TPEG), and 918–1015 (QPSF…LGEG). The segment at 696 to 717 (HASLPSDHHETPPAAPDKNPQN) is disordered. Residues asparagine 767, asparagine 822, asparagine 945, and asparagine 1027 are each glycosylated (N-linked (GlcNAc...) asparagine). The chain crosses the membrane as a helical span at residues 1084 to 1104 (FIGLMCAIALLTLILLTICFV). The Cytoplasmic segment spans residues 1105-1209 (KRNRGGKYSV…SSTATFPLRA (105 aa)). A compositionally biased stretch (basic and acidic residues) spans 1115-1133 (KEKEDLHPDPEVQSAKDET). The tract at residues 1115-1170 (KEKEDLHPDPEVQSAKDETFGEYSDSDEKPLKGSLRSLNRNMQPTESADSLVEYGE) is disordered. Phosphoserine is present on residues serine 1148, serine 1161, and serine 1181. The span at 1150 to 1162 (RSLNRNMQPTESA) shows a compositional bias: polar residues. Positions 1182 to 1186 (FIGAY) match the FIG[AQ]Y motif.

It belongs to the immunoglobulin superfamily. L1/neurofascin/NgCAM family. May interact with L1CAM. May interact with ITGB1/ITGA1 heterodimer and ITGB1/ITGA2 heterodimer as well as with ANK3. Cleavage by metalloprotease ADAM8 in the extracellular part generates 2 soluble forms (125 kDa and 165 kDa) in vitro and is inhibited by metalloprotease inhibitors. In brain extracts, these two soluble forms are also present and are dramatically reduced in mice lacking ADAM8. Cleaved by BACE1. In terms of processing, N-glycosylated. Contains N-linked oligosaccharides with a sulfated carbohydrate structure type HNK-1 (SO4-3-GlcUABeta1,3GalBeta1,4GlcNAc). Post-translationally, O-glycosylated. Expressed in the brain, in the cerebellum and in the spinal cord. Detected in the retina and the optic nerve. Expressed in neurons and glial cells in the central nervous system and by Schwann cells in the peripheral nervous system.

It localises to the cell membrane. The protein localises to the secreted. The protein resides in the extracellular space. It is found in the extracellular matrix. Extracellular matrix and cell adhesion protein that plays a role in nervous system development and in synaptic plasticity. Both soluble and membranous forms promote neurite outgrowth of cerebellar and hippocampal neurons and suppress neuronal cell death. Plays a role in neuronal positioning of pyramidal neurons as well as in regulation of both the number of interneurons and the efficacy of GABAergic synapses. May play a role in regulating cell migration in nerve regeneration and cortical development. Potentiates integrin-dependent cell migration towards extracellular matrix proteins. Recruits ANK3 to the plasma membrane. This Mus musculus (Mouse) protein is Neural cell adhesion molecule L1-like protein (Chl1).